Consider the following 108-residue polypeptide: Nucleoid-associated protein Bmul_1447/BMULJ_01796 (108 aa).

Residues 84–108 (EATSQEKMSGMTSGLPLPPGFKLPF) are disordered. A compositionally biased stretch (polar residues) spans 85-95 (ATSQEKMSGMT). Positions 99–108 (PLPPGFKLPF) are enriched in pro residues.

The protein belongs to the YbaB/EbfC family. As to quaternary structure, homodimer.

The protein resides in the cytoplasm. It is found in the nucleoid. In terms of biological role, binds to DNA and alters its conformation. May be involved in regulation of gene expression, nucleoid organization and DNA protection. This is Nucleoid-associated protein Bmul_1447/BMULJ_01796 from Burkholderia multivorans (strain ATCC 17616 / 249).